The following is a 354-amino-acid chain: Anthranilate phosphoribosyltransferase (354 aa).

Residues glycine 94, 97 to 98, threonine 102, 104 to 107, 122 to 130, and serine 134 contribute to the 5-phospho-alpha-D-ribose 1-diphosphate site; these read GD, NIST, and KHGNRAASS. Residue glycine 94 coordinates anthranilate. Serine 106 is a Mg(2+) binding site. Asparagine 125 is a binding site for anthranilate. Arginine 180 lines the anthranilate pocket. Mg(2+) contacts are provided by aspartate 238 and glutamate 239.

This sequence belongs to the anthranilate phosphoribosyltransferase family. In terms of assembly, homodimer. It depends on Mg(2+) as a cofactor.

It catalyses the reaction N-(5-phospho-beta-D-ribosyl)anthranilate + diphosphate = 5-phospho-alpha-D-ribose 1-diphosphate + anthranilate. It functions in the pathway amino-acid biosynthesis; L-tryptophan biosynthesis; L-tryptophan from chorismate: step 2/5. In terms of biological role, catalyzes the transfer of the phosphoribosyl group of 5-phosphorylribose-1-pyrophosphate (PRPP) to anthranilate to yield N-(5'-phosphoribosyl)-anthranilate (PRA). The polypeptide is Anthranilate phosphoribosyltransferase (Streptomyces griseus subsp. griseus (strain JCM 4626 / CBS 651.72 / NBRC 13350 / KCC S-0626 / ISP 5235)).